The following is a 217-amino-acid chain: Probable transaldolase (217 aa).

The Schiff-base intermediate with substrate role is filled by Lys-83.

Belongs to the transaldolase family. Type 3B subfamily.

It is found in the cytoplasm. The enzyme catalyses D-sedoheptulose 7-phosphate + D-glyceraldehyde 3-phosphate = D-erythrose 4-phosphate + beta-D-fructose 6-phosphate. It participates in carbohydrate degradation; pentose phosphate pathway; D-glyceraldehyde 3-phosphate and beta-D-fructose 6-phosphate from D-ribose 5-phosphate and D-xylulose 5-phosphate (non-oxidative stage): step 2/3. Its function is as follows. Transaldolase is important for the balance of metabolites in the pentose-phosphate pathway. The protein is Probable transaldolase of Dinoroseobacter shibae (strain DSM 16493 / NCIMB 14021 / DFL 12).